Here is a 206-residue protein sequence, read N- to C-terminus: Small ribosomal subunit protein eS1 (206 aa).

It belongs to the eukaryotic ribosomal protein eS1 family.

This Methanocorpusculum labreanum (strain ATCC 43576 / DSM 4855 / Z) protein is Small ribosomal subunit protein eS1.